A 649-amino-acid polypeptide reads, in one-letter code: Glucan endo-1,3-beta-glucosidase btgC (649 aa).

2 disordered regions span residues 1–50 and 110–224; these read MGDR…AHTH and YHTT…AGGA. The Cytoplasmic segment spans residues 1 to 274; that stretch reads MGDRSEQYGD…PRPSGASRKR (274 aa). The span at 144–157 shows a compositional bias: low complexity; the sequence is GSSAALSAAGAPAG. Positions 198–208 are enriched in acidic residues; it reads NPDDILDDGDD. Residues 275–295 form a helical; Signal-anchor for type II membrane protein membrane-spanning segment; sequence GWIIGGILAFIVIGAIVGGAV. The Extracellular segment spans residues 296–649; the sequence is GGTLGNRRSE…IPDCGGKTAA (354 aa). The tract at residues 301-329 is disordered; the sequence is NRRSETASESSEVSADDDTETNGDLDKNS. Acidic residues predominate over residues 314–323; sequence SADDDTETNG. Residues Asn-369, Asn-392, and Asn-420 are each glycosylated (N-linked (GlcNAc...) asparagine). Glu-452 acts as the Proton donor in catalysis. Glu-551 acts as the Nucleophile in catalysis. Residue Asn-596 is glycosylated (N-linked (GlcNAc...) asparagine).

The protein belongs to the glycosyl hydrolase 17 family.

It localises to the cell membrane. The catalysed reaction is Hydrolysis of (1-&gt;3)-beta-D-glucosidic linkages in (1-&gt;3)-beta-D-glucans.. Glucanases play a role in cell expansion during growth, in cell-cell fusion during mating, and in spore release during sporulation. This enzyme may be involved in beta-glucan degradation. Active on laminarin and lichenan. The chain is Glucan endo-1,3-beta-glucosidase btgC (btgC) from Emericella nidulans (strain FGSC A4 / ATCC 38163 / CBS 112.46 / NRRL 194 / M139) (Aspergillus nidulans).